Here is a 328-residue protein sequence, read N- to C-terminus: Ribosomal RNA small subunit methyltransferase H (328 aa).

Residues 64-66 (GGH), D83, F112, D129, and Q136 each bind S-adenosyl-L-methionine.

The protein belongs to the methyltransferase superfamily. RsmH family.

The protein localises to the cytoplasm. It carries out the reaction cytidine(1402) in 16S rRNA + S-adenosyl-L-methionine = N(4)-methylcytidine(1402) in 16S rRNA + S-adenosyl-L-homocysteine + H(+). Functionally, specifically methylates the N4 position of cytidine in position 1402 (C1402) of 16S rRNA. The protein is Ribosomal RNA small subunit methyltransferase H of Bdellovibrio bacteriovorus (strain ATCC 15356 / DSM 50701 / NCIMB 9529 / HD100).